Here is a 341-residue protein sequence, read N- to C-terminus: Dye-decolorizing peroxidase (341 aa).

Residue aspartate 148 is the Proton acceptor of the active site. A heme-binding site is contributed by histidine 221. The interval phenylalanine 304–glutamine 341 is targeting peptide.

This sequence belongs to the DyP-type peroxidase family. In terms of assembly, homohexamer. Requires heme b as cofactor.

Its subcellular location is the encapsulin nanocompartment. In terms of biological role, cargo protein of a type 1 encapsulin nanocompartment. Has both general peroxidase activity and dye-decolorizing activity. Can catalyze the oxidation of both protoporphyrinogen IX and coproporphyrinogen III to their corresponding porphyrins. Also efficiently decolorizes the dyes alizarin red and Cibacron blue F3GA. This cargo-loaded encapsulin nanocompartment is probably involved in protection against oxidative damage. The polypeptide is Dye-decolorizing peroxidase (Rhodococcus erythropolis (strain PR4 / NBRC 100887)).